A 382-amino-acid chain; its full sequence is S-adenosylmethionine synthase (382 aa).

Glu10 contributes to the Mg(2+) binding site. His16 contributes to the ATP binding site. Residue Glu44 coordinates K(+). L-methionine-binding residues include Glu57 and Gln100. Residues 166–168, 234–237, Asp245, 251–252, Ala268, Lys272, and Lys276 each bind ATP; these read DTK, SGRF, and RK. Asp245 contacts L-methionine. Residue Lys276 participates in L-methionine binding.

The protein belongs to the AdoMet synthase family. The cofactor is Mg(2+). K(+) serves as cofactor.

It carries out the reaction L-methionine + ATP + H2O = S-adenosyl-L-methionine + phosphate + diphosphate. Its pathway is amino-acid biosynthesis; S-adenosyl-L-methionine biosynthesis; S-adenosyl-L-methionine from L-methionine: step 1/1. Functionally, catalyzes the formation of S-adenosylmethionine from methionine and ATP. The reaction comprises two steps that are both catalyzed by the same enzyme: formation of S-adenosylmethionine (AdoMet) and triphosphate, and subsequent hydrolysis of the triphosphate. This chain is S-adenosylmethionine synthase (sam1), found in Schizosaccharomyces pombe (strain 972 / ATCC 24843) (Fission yeast).